Here is an 84-residue protein sequence, read N- to C-terminus: MGKEERYTKKPKPDDRSDNVEKLQEMIHNTIENYREAEDYLKLHAEELSPEEIERIKEKNRNRLISIQNMRQEIIDEVHDRERR.

A disordered region spans residues 1 to 20; sequence MGKEERYTKKPKPDDRSDNV.

It belongs to the Tlp family.

This Caldanaerobacter subterraneus subsp. tengcongensis (strain DSM 15242 / JCM 11007 / NBRC 100824 / MB4) (Thermoanaerobacter tengcongensis) protein is Protein Tlp homolog.